Consider the following 120-residue polypeptide: Cell cycle protein GpsB (120 aa).

Residues 34–74 adopt a coiled-coil conformation; it reads LDDVIKDYDTYNKELERLNDENERLRAKVDELNRQVEVGSS. The segment at 69 to 90 is disordered; sequence VEVGSSMSNQTASRQPVSSATN. Over residues 71-90 the composition is skewed to polar residues; sequence VGSSMSNQTASRQPVSSATN.

This sequence belongs to the GpsB family. Forms polymers through the coiled coil domains. Interacts with PBP1, MreC and EzrA.

It localises to the cytoplasm. Divisome component that associates with the complex late in its assembly, after the Z-ring is formed, and is dependent on DivIC and PBP2B for its recruitment to the divisome. Together with EzrA, is a key component of the system that regulates PBP1 localization during cell cycle progression. Its main role could be the removal of PBP1 from the cell pole after pole maturation is completed. Also contributes to the recruitment of PBP1 to the division complex. Not essential for septum formation. The polypeptide is Cell cycle protein GpsB (Limosilactobacillus reuteri (strain DSM 20016) (Lactobacillus reuteri)).